The primary structure comprises 307 residues: Coenzyme PQQ synthesis protein B (307 aa).

It belongs to the PqqB family.

It functions in the pathway cofactor biosynthesis; pyrroloquinoline quinone biosynthesis. In terms of biological role, may be involved in the transport of PQQ or its precursor to the periplasm. The sequence is that of Coenzyme PQQ synthesis protein B from Gluconacetobacter diazotrophicus (strain ATCC 49037 / DSM 5601 / CCUG 37298 / CIP 103539 / LMG 7603 / PAl5).